The primary structure comprises 317 residues: Probable transcription factor At5g61620 (317 aa).

Residues 12 to 25 (CSHCGHNGHNARTC) form a CCHC-type zinc finger. The disordered stretch occupies residues 77–111 (DPIAAVDDTGYHSDGQIHSKKGKTAHEKKKGKPWT). Residues 94–108 (HSKKGKTAHEKKKGK) are compositionally biased toward basic residues. The HTH myb-type domain occupies 102–158 (HEKKKGKPWTEEEHRNFLIGLNKLGKGDWRGIAKSFVSTRTPTQVASHAQKYFIRLN). A DNA-binding region (H-T-H motif) is located at residues 130 to 154 (WRGIAKSFVSTRTPTQVASHAQKYF). The disordered stretch occupies residues 173-206 (SLEDQKEKERNSQDASTKTPPKQPITGIQQPVVQ). The segment covering 175 to 184 (EDQKEKERNS) has biased composition (basic and acidic residues). Positions 185 to 206 (QDASTKTPPKQPITGIQQPVVQ) are enriched in polar residues.

It is found in the nucleus. In terms of biological role, probable transcription factor involved in somatic embryogenesis. Acts as a positive regulator of BHLH109. The chain is Probable transcription factor At5g61620 from Arabidopsis thaliana (Mouse-ear cress).